We begin with the raw amino-acid sequence, 205 residues long: Alpha-1-acid glycoprotein (205 aa).

The signal sequence occupies residues Met-1–Ala-18. N-linked (GlcNAc...) asparagine glycans are attached at residues Asn-25, Asn-34, Asn-76, Asn-94, Asn-104, and Asn-134. The cysteines at positions 91 and 183 are disulfide-linked.

It belongs to the calycin superfamily. Lipocalin family.

It is found in the secreted. Functions as a transport protein in the blood stream. Binds various ligands in the interior of its beta-barrel domain. Appears to function in modulating the activity of the immune system during the acute-phase reaction. This chain is Alpha-1-acid glycoprotein (Orm1), found in Rattus norvegicus (Rat).